We begin with the raw amino-acid sequence, 766 residues long: Single-minded homolog 1 (766 aa).

Residues 1–53 (MKEKSKNAARTRREKENSEFYELAKLLPLPSAITSQLDKASIIRLTTSYLKMR) form the bHLH domain. 2 consecutive PAS domains span residues 77–147 (GREL…QPYH) and 218–288 (PPSA…LVKG). One can recognise a PAC domain in the interval 292-335 (TKYYRFLAKHGGWVWVQSYATIVHNSRSSRPHCIVSVNYVLTDT). The Single-minded C-terminal domain maps to 336–766 (EYKGLQLSLD…GTSVIITNGS (431 aa)). Residues 353–365 (AFSYTSSSTPTMT) show a composition bias toward polar residues. 2 disordered regions span residues 353–431 (AFSY…SQHD) and 528–563 (WDED…EPSK). The Nuclear localization signal motif lies at 368-387 (RKGAKSRLSSSKSKSRTSPY). Low complexity predominate over residues 373-385 (SRLSSSKSKSRTS). Basic and acidic residues predominate over residues 394–404 (HTERSESDHDS).

As to quaternary structure, efficient DNA binding requires dimerization with another bHLH protein. Heterodimer; forms a heterodimer with ARNT, ARNT2.

It localises to the nucleus. In terms of biological role, transcriptional factor that may have pleiotropic effects during embryogenesis and in the adult. This is Single-minded homolog 1 (SIM1) from Homo sapiens (Human).